The sequence spans 378 residues: Ribosomal RNA large subunit methyltransferase G (378 aa).

This sequence belongs to the methyltransferase superfamily. RlmG family.

The protein localises to the cytoplasm. The catalysed reaction is guanosine(1835) in 23S rRNA + S-adenosyl-L-methionine = N(2)-methylguanosine(1835) in 23S rRNA + S-adenosyl-L-homocysteine + H(+). Functionally, specifically methylates the guanine in position 1835 (m2G1835) of 23S rRNA. This Shewanella sp. (strain W3-18-1) protein is Ribosomal RNA large subunit methyltransferase G.